A 72-amino-acid chain; its full sequence is MSFEQAMKELETVVGQLERGDVALDQSIALYERGAALKKRCEDELKRAEEKVAAITLDSNGQPTGTKPVEGL.

Belongs to the XseB family. Heterooligomer composed of large and small subunits.

It is found in the cytoplasm. The enzyme catalyses Exonucleolytic cleavage in either 5'- to 3'- or 3'- to 5'-direction to yield nucleoside 5'-phosphates.. In terms of biological role, bidirectionally degrades single-stranded DNA into large acid-insoluble oligonucleotides, which are then degraded further into small acid-soluble oligonucleotides. This is Exodeoxyribonuclease 7 small subunit from Ruegeria pomeroyi (strain ATCC 700808 / DSM 15171 / DSS-3) (Silicibacter pomeroyi).